The primary structure comprises 252 residues: Adenosylcobinamide-GDP ribazoletransferase (252 aa).

Helical transmembrane passes span 36 to 56, 59 to 79, 109 to 129, 133 to 153, 170 to 192, 199 to 218, and 228 to 248; these read LVPI…MLLV, FFYK…TGGI, VGTN…VILT, PAYM…GSIV, SFID…VIFL, GYII…KYFT, and ILGA…YAVL.

Belongs to the CobS family. Mg(2+) serves as cofactor.

The protein localises to the cell membrane. It catalyses the reaction alpha-ribazole + adenosylcob(III)inamide-GDP = adenosylcob(III)alamin + GMP + H(+). It carries out the reaction alpha-ribazole 5'-phosphate + adenosylcob(III)inamide-GDP = adenosylcob(III)alamin 5'-phosphate + GMP + H(+). It functions in the pathway cofactor biosynthesis; adenosylcobalamin biosynthesis; adenosylcobalamin from cob(II)yrinate a,c-diamide: step 7/7. In terms of biological role, joins adenosylcobinamide-GDP and alpha-ribazole to generate adenosylcobalamin (Ado-cobalamin). Also synthesizes adenosylcobalamin 5'-phosphate from adenosylcobinamide-GDP and alpha-ribazole 5'-phosphate. The chain is Adenosylcobinamide-GDP ribazoletransferase from Clostridium acetobutylicum (strain ATCC 824 / DSM 792 / JCM 1419 / IAM 19013 / LMG 5710 / NBRC 13948 / NRRL B-527 / VKM B-1787 / 2291 / W).